A 272-amino-acid polypeptide reads, in one-letter code: Octanoyltransferase (272 aa).

Polar residues predominate over residues 1 to 12; sequence MQQDPPTSQPHT. Residues 1 to 20 form a disordered region; it reads MQQDPPTSQPHTPQIVDGVK. Residues 65–255 enclose the BPL/LPL catalytic domain; the sequence is HQRPNTVIYV…EMMSFQPYEM (191 aa). Residues 103 to 110, 175 to 177, and 188 to 190 each bind substrate; these read RGGEITWH, AIG, and GFA. Cys-206 acts as the Acyl-thioester intermediate in catalysis.

Belongs to the LipB family.

It localises to the cytoplasm. It catalyses the reaction octanoyl-[ACP] + L-lysyl-[protein] = N(6)-octanoyl-L-lysyl-[protein] + holo-[ACP] + H(+). The protein operates within protein modification; protein lipoylation via endogenous pathway; protein N(6)-(lipoyl)lysine from octanoyl-[acyl-carrier-protein]: step 1/2. Its function is as follows. Catalyzes the transfer of endogenously produced octanoic acid from octanoyl-acyl-carrier-protein onto the lipoyl domains of lipoate-dependent enzymes. Lipoyl-ACP can also act as a substrate although octanoyl-ACP is likely to be the physiological substrate. The polypeptide is Octanoyltransferase (Cutibacterium acnes (strain DSM 16379 / KPA171202) (Propionibacterium acnes)).